The following is a 341-amino-acid chain: L-threonine 3-dehydrogenase (341 aa).

Cysteine 38 provides a ligand contact to Zn(2+). Residues threonine 40 and histidine 43 each act as charge relay system in the active site. Zn(2+)-binding residues include histidine 63, glutamate 64, cysteine 93, cysteine 96, cysteine 99, and cysteine 107. NAD(+) is bound by residues isoleucine 175, aspartate 195, arginine 200, 262–264, and 286–287; these read LGI and IY.

This sequence belongs to the zinc-containing alcohol dehydrogenase family. In terms of assembly, homotetramer. It depends on Zn(2+) as a cofactor.

It localises to the cytoplasm. The catalysed reaction is L-threonine + NAD(+) = (2S)-2-amino-3-oxobutanoate + NADH + H(+). The protein operates within amino-acid degradation; L-threonine degradation via oxydo-reductase pathway; glycine from L-threonine: step 1/2. In terms of biological role, catalyzes the NAD(+)-dependent oxidation of L-threonine to 2-amino-3-ketobutyrate. The chain is L-threonine 3-dehydrogenase from Shewanella frigidimarina (strain NCIMB 400).